Consider the following 248-residue polypeptide: MSQKKQKIQVEQKVPENVAKKTQRDSKLRDAVAKRRTERLAANKTRRAQWEKTAQAYEAEYKAADKSLVDNLRKAKTEGGFYVPAEAKLILVVRIRGINTLNPQVRQTLRLLKLRQLHNAAFVRVNKATIEMIRKVEPYVTYGYPSRAVIKNLIYKRGYAKINGQRIPITNNNVIEQQLGKVGIHSVEDLIHEITTVGPHFKEANRFLWAFKLRGPRGGFIAKRKSFINQGDWGNREDLINDLVKRMI.

The segment at 1-44 (MSQKKQKIQVEQKVPENVAKKTQRDSKLRDAVAKRRTERLAANK) is disordered. Positions 8 to 41 (IQVEQKVPENVAKKTQRDSKLRDAVAKRRTERLA) are enriched in basic and acidic residues.

The protein belongs to the universal ribosomal protein uL30 family.

Functionally, binds to G-rich structures in 28S rRNA and in mRNAs. Plays a regulatory role in the translation apparatus; inhibits cell-free translation of mRNAs. This chain is Large ribosomal subunit protein uL30A (Rpl7-1), found in Paramecium tetraurelia.